We begin with the raw amino-acid sequence, 44 residues long: Large ribosomal subunit protein bL34 (44 aa).

Basic residues-rich tracts occupy residues 1-22 (MKRTLGGTSRKRKRTSGFRARM) and 31-44 (IRARRKKGRHRLSV). Residues 1-44 (MKRTLGGTSRKRKRTSGFRARMRTPDGRNVIRARRKKGRHRLSV) form a disordered region.

It belongs to the bacterial ribosomal protein bL34 family.

The sequence is that of Large ribosomal subunit protein bL34 from Nostoc punctiforme (strain ATCC 29133 / PCC 73102).